Reading from the N-terminus, the 564-residue chain is Tripeptidyl-peptidase 1 (564 aa).

Residues 1–19 (MGLQACLLGLFALILSGKC) form the signal peptide. Residues 20 to 195 (SYSPEPDQRR…PEPQVTGTVG (176 aa)) constitute a propeptide, removed in mature form. An intrachain disulfide couples cysteine 111 to cysteine 122. One can recognise a Peptidase S53 domain in the interval 199-564 (GVTPSVIRKR…PALPKTLLNP (366 aa)). 2 N-linked (GlcNAc...) asparagine glycosylation sites follow: asparagine 210 and asparagine 222. Residues glutamate 272 and aspartate 276 each act as charge relay system in the active site. N-linked (GlcNAc...) asparagine glycosylation is found at asparagine 286, asparagine 313, and asparagine 443. 2 disulfides stabilise this stretch: cysteine 365-cysteine 527 and cysteine 523-cysteine 538. Serine 475 serves as the catalytic Charge relay system. Aspartate 518 and valine 519 together coordinate Ca(2+). Ca(2+) is bound by residues glycine 540, glycine 542, and aspartate 544.

In terms of assembly, monomer. Interacts with CLN5. Interacts with CLN3. Requires Ca(2+) as cofactor. Post-translationally, activated by autocatalytic proteolytical processing upon acidification. N-glycosylation is required for processing and activity.

The protein resides in the lysosome. The protein localises to the melanosome. It catalyses the reaction Release of an N-terminal tripeptide from a polypeptide, but also has endopeptidase activity.. Lysosomal serine protease with tripeptidyl-peptidase I activity. May act as a non-specific lysosomal peptidase which generates tripeptides from the breakdown products produced by lysosomal proteinases. Requires substrates with an unsubstituted N-terminus. This Pongo abelii (Sumatran orangutan) protein is Tripeptidyl-peptidase 1 (TPP1).